We begin with the raw amino-acid sequence, 437 residues long: Trigger factor (437 aa).

Residues 161–246 (DDQVNIDFVG…VNSVSAPQLP (86 aa)) form the PPIase FKBP-type domain.

Belongs to the FKBP-type PPIase family. Tig subfamily.

It localises to the cytoplasm. The catalysed reaction is [protein]-peptidylproline (omega=180) = [protein]-peptidylproline (omega=0). Involved in protein export. Acts as a chaperone by maintaining the newly synthesized protein in an open conformation. Functions as a peptidyl-prolyl cis-trans isomerase. The polypeptide is Trigger factor (Pseudomonas putida (strain W619)).